The primary structure comprises 309 residues: Protoheme IX farnesyltransferase (309 aa).

A run of 9 helical transmembrane segments spans residues 30-49 (VMSL…PGGV), 53-75 (IGFT…NMWY), 98-118 (AGEA…MLGL), 123-143 (VAAG…SMWL), 151-171 (IVIG…AVTG), 178-198 (VLMF…LALF), 224-244 (ILIY…TEVA), 247-267 (VYLI…YDIW), and 285-305 (VFKF…LDAI).

It belongs to the UbiA prenyltransferase family. Protoheme IX farnesyltransferase subfamily. In terms of assembly, interacts with CtaA.

Its subcellular location is the cell inner membrane. It catalyses the reaction heme b + (2E,6E)-farnesyl diphosphate + H2O = Fe(II)-heme o + diphosphate. The protein operates within porphyrin-containing compound metabolism; heme O biosynthesis; heme O from protoheme: step 1/1. Converts heme B (protoheme IX) to heme O by substitution of the vinyl group on carbon 2 of heme B porphyrin ring with a hydroxyethyl farnesyl side group. In Jannaschia sp. (strain CCS1), this protein is Protoheme IX farnesyltransferase.